Consider the following 257-residue polypeptide: Hydroxyacylglutathione hydrolase (257 aa).

Zn(2+) contacts are provided by histidine 56, histidine 58, aspartate 60, histidine 61, histidine 112, aspartate 131, and histidine 169.

This sequence belongs to the metallo-beta-lactamase superfamily. Glyoxalase II family. In terms of assembly, monomer. The cofactor is Zn(2+).

It catalyses the reaction an S-(2-hydroxyacyl)glutathione + H2O = a 2-hydroxy carboxylate + glutathione + H(+). It functions in the pathway secondary metabolite metabolism; methylglyoxal degradation; (R)-lactate from methylglyoxal: step 2/2. Functionally, thiolesterase that catalyzes the hydrolysis of S-D-lactoyl-glutathione to form glutathione and D-lactic acid. The polypeptide is Hydroxyacylglutathione hydrolase (Ectopseudomonas mendocina (strain ymp) (Pseudomonas mendocina)).